Here is a 287-residue protein sequence, read N- to C-terminus: uncharacterized protein (287 aa).

The first 20 residues, 1–20 (MKVICGSVFLFSLFFQVVLG), serve as a signal peptide directing secretion. The Extracellular portion of the chain corresponds to 22–201 (YFSSSSGNPN…AFYGPRRNIK (180 aa)). Asn120, Asn154, and Asn166 each carry an N-linked (GlcNAc...) asparagine glycan. The chain crosses the membrane as a helical span at residues 202-222 (AAIAVPSVILGLILVALVYYA). At 223–287 (YRKDTWKIYM…YYQSQVKKFH (65 aa)) the chain is on the cytoplasmic side.

The protein localises to the membrane. This is an uncharacterized protein from Schizosaccharomyces pombe (strain 972 / ATCC 24843) (Fission yeast).